We begin with the raw amino-acid sequence, 239 residues long: DNA oxidative demethylase ALKBH2 (239 aa).

The PCNA-binding motif lies at 3–7; it reads KFLVR. Residues 11-32 form a disordered region; that stretch reads RDLQGGGEEPAPTGGASGDLKS. Substrate contacts are provided by residues 80 to 82 and 100 to 102; these read FGK and YTF. The 106-residue stretch at 130–235 folds into the Fe2OG dioxygenase domain; the sequence is TFNFVLVNRY…RVNLTFRKIL (106 aa). 2-oxoglutarate contacts are provided by Asn137, Tyr139, and His149. The Fe cation site is built by His149 and Asp151. Asp152 lines the substrate pocket. 4 residues coordinate 2-oxoglutarate: His214, Arg226, Thr230, and Arg232. Fe cation is bound at residue His214.

It belongs to the alkB family. Interacts with PCNA homotrimer; this interaction is enhanced during the S-phase of the cell cycle. Interacts with nucleolar proteins NCL, UBTF and NPM1. Interacts with XRCC5-XRCC6 heterodimer. Requires Fe(2+) as cofactor. Detected in liver, testis and kidney (at protein level). Detected in heart and testis.

It is found in the nucleus. The protein localises to the nucleolus. The protein resides in the nucleoplasm. The catalysed reaction is a methylated nucleobase within DNA + 2-oxoglutarate + O2 = a nucleobase within DNA + formaldehyde + succinate + CO2. The enzyme catalyses an N(1)-methyl-2'-deoxyadenosine in double-stranded DNA + 2-oxoglutarate + O2 = a 2'-deoxyadenosine in double-stranded DNA + formaldehyde + succinate + CO2 + H(+). It catalyses the reaction an N(1)-methyl-2'-deoxyadenosine in single-stranded DNA + 2-oxoglutarate + O2 = a 2'-deoxyadenosine in single-stranded DNA + formaldehyde + succinate + CO2 + H(+). It carries out the reaction an N(3)-methyl-2'-deoxycytidine in double-stranded DNA + 2-oxoglutarate + O2 = a 2'-deoxycytidine in double-stranded DNA + formaldehyde + succinate + CO2 + H(+). The catalysed reaction is an N(3)-methyl-2'-deoxycytidine in single-stranded DNA + 2-oxoglutarate + O2 = a 2'-deoxycytidine in single-stranded DNA + formaldehyde + succinate + CO2 + H(+). The enzyme catalyses a 1,N(6)-etheno-2'-deoxyadenosine in double-stranded DNA + 2-oxoglutarate + O2 + H2O = a 2'-deoxyadenosine in double-stranded DNA + glyoxal + succinate + CO2. It catalyses the reaction a 1,N(6)-etheno-2'-deoxyadenosine in single-stranded DNA + 2-oxoglutarate + O2 + H2O = a 2'-deoxyadenosine in single-stranded DNA + glyoxal + succinate + CO2. It carries out the reaction a 3,N(4)-etheno-2'-deoxycytidine in double-stranded DNA + 2-oxoglutarate + O2 + H2O = a 2'-deoxycytidine in double-stranded DNA + glyoxal + succinate + CO2. The catalysed reaction is a 3,N(4)-etheno-2'-deoxycytidine in single-stranded DNA + 2-oxoglutarate + O2 + H2O = a 2'-deoxycytidine in single-stranded DNA + glyoxal + succinate + CO2. The enzyme catalyses a 1,N(2)-etheno-2'-deoxyguanosine in double-stranded DNA + 2-oxoglutarate + O2 + H2O = a 2'-deoxyguanosine in double-stranded DNA + glyoxal + succinate + CO2. Its activity is regulated as follows. Activated by magnesium ions. Dioxygenase that repairs alkylated nucleic acid bases by direct reversal oxidative dealkylation. Can process both double-stranded (ds) and single-stranded (ss) DNA substrates, with a strong preference for dsDNA. Uses molecular oxygen, 2-oxoglutarate and iron as cofactors to oxidize the alkyl groups that are subsequently released as aldehydes, regenerating the undamaged bases. Probes the base pair stability, locates a weakened base pair and flips the damaged base to accommodate the lesion in its active site for efficient catalysis. Repairs monoalkylated bases, specifically N1-methyladenine and N3-methylcytosine, as well as higher order alkyl adducts such as bases modified with exocyclic bridged adducts known as etheno adducts including 1,N6-ethenoadenine, 3,N4-ethenocytosine and 1,N2-ethenoguanine. Acts as a gatekeeper of genomic integrity under alkylation stress. Efficiently repairs alkylated lesions in ribosomal DNA (rDNA). These lesions can cause ss- and dsDNA strand breaks that severely impair rDNA transcription. In a response mechanism to DNA damage, associates with PCNA at replication forks to repair alkylated adducts prior to replication. The polypeptide is DNA oxidative demethylase ALKBH2 (Alkbh2) (Mus musculus (Mouse)).